The sequence spans 880 residues: A-adding tRNA nucleotidyltransferase (880 aa).

CBS domains lie at 315 to 373 (MSSP…NLPV) and 377 to 435 (MHTE…RNAE). Position 487-490 (487-490 (GFVR)) interacts with ATP. 2 residues coordinate Mg(2+): aspartate 500 and aspartate 502. ATP-binding positions include 574–575 (RD), asparagine 579, 619–628 (DPTRVFRAIR), arginine 632, and arginine 661.

The protein belongs to the tRNA nucleotidyltransferase/poly(A) polymerase family. Requires Mg(2+) as cofactor.

The enzyme catalyses a tRNA with a 3' CC end + ATP = a tRNA with a 3' CCA end + diphosphate. TRNA nucleotidyltransferase involved in the synthesis of the tRNA CCA terminus. Adds the terminal adenosine residue to tRNA. The chain is A-adding tRNA nucleotidyltransferase from Geobacter sulfurreducens (strain ATCC 51573 / DSM 12127 / PCA).